The following is a 264-amino-acid chain: QQPVSRQPQQIIPQQPQQPFPLQPQQPQPFPQQPIPQQPQPYPQQPQSFPQQPFPSQQPFPQQPPFWQQQPVLSQQQPCTQDQTPLLQEQQDQMLVQVQIPFVHPSILQQLNPCKVFLQQQCSPLAMSQRIARSQMLQQSSCHVLQQQCCQQLPQIPEQLRHEAVRAIVYSIVLQEQSLQLVQGVSQPQQQSQQQQVGQCSFQQPQPQQGQQQQVPQSVFLQPHQIAQLEATTSIALRTLPTMCSVNVPLYRIVPLAIDTRVGV.

Over residues 1–15 (QQPVSRQPQQIIPQQ) the composition is skewed to low complexity. A disordered region spans residues 1-66 (QQPVSRQPQQ…QQPFPQQPPF (66 aa)). Composition is skewed to pro residues over residues 16–44 (PQQPFPLQPQQPQPFPQQPIPQQPQPYPQ) and 52–64 (QPFPSQQPFPQQP).

Belongs to the gliadin/glutenin family. Developing endosperm.

Functionally, sulfur-rich seed storage protein. This Hordeum vulgare (Barley) protein is B3-hordein.